The following is a 440-amino-acid chain: Putative postmeiotic segregation increased 2-like protein 1 (440 aa).

Residues 164 to 178 (RVEHNVESSRWEPRR) are compositionally biased toward basic and acidic residues. Positions 164-215 (RVEHNVESSRWEPRRRGACGSRGGNFPSPRGGSGVASLERAESSSTEPAKAI) are disordered. The 135-residue stretch at 230-364 (PVVPSLSTAV…MTVSVKQLFS (135 aa)) folds into the Histidine kinase domain.

The protein belongs to the DNA mismatch repair MutL/HexB family. In terms of tissue distribution, highly expressed in kidney, spleen, adrenal gland, ovary and cerebellum and to a lower extent in liver, esophagus, stomach, duodenum, colon, bladder, uterus, lung, pancreas and cerebrum. Not expressed in heart.

The sequence is that of Putative postmeiotic segregation increased 2-like protein 1 (PMS2P1) from Homo sapiens (Human).